Consider the following 162-residue polypeptide: Auxin-responsive protein SAUR36 (162 aa).

It belongs to the ARG7 family. As to expression, expressed in embryo, endosperm, growing hypocotyls and shoot apical meristems.

Functionally, acts a positive regulator of leaf senescence and may mediate auxin-induced leaf senescence. Plays a role in the regulation of seed germination by gibberellins and abscisic acid (ABA). Plays a role in the regulation of light-dependent hypocotyl elongation. This chain is Auxin-responsive protein SAUR36, found in Arabidopsis thaliana (Mouse-ear cress).